The chain runs to 191 residues: Elongation factor P-like protein (191 aa).

This sequence belongs to the elongation factor P family.

The sequence is that of Elongation factor P-like protein from Shewanella sediminis (strain HAW-EB3).